We begin with the raw amino-acid sequence, 674 residues long: DNA ligase (674 aa).

NAD(+)-binding positions include 35 to 39, 84 to 85, and E116; these read DAEYD and SL. The active-site N6-AMP-lysine intermediate is K118. NAD(+)-binding residues include R139, E176, K293, and K317. The Zn(2+) site is built by C411, C414, C429, and C435. A BRCT domain is found at 593-674; that stretch reads DGVKPLEGTT…LLALLEEHGV (82 aa).

The protein belongs to the NAD-dependent DNA ligase family. LigA subfamily. The cofactor is Mg(2+). Mn(2+) serves as cofactor.

The enzyme catalyses NAD(+) + (deoxyribonucleotide)n-3'-hydroxyl + 5'-phospho-(deoxyribonucleotide)m = (deoxyribonucleotide)n+m + AMP + beta-nicotinamide D-nucleotide.. Its function is as follows. DNA ligase that catalyzes the formation of phosphodiester linkages between 5'-phosphoryl and 3'-hydroxyl groups in double-stranded DNA using NAD as a coenzyme and as the energy source for the reaction. It is essential for DNA replication and repair of damaged DNA. The sequence is that of DNA ligase from Saccharophagus degradans (strain 2-40 / ATCC 43961 / DSM 17024).